A 468-amino-acid polypeptide reads, in one-letter code: Keratin, type I cytoskeletal 26 (468 aa).

The interval 1–82 (MSFRLSGGSR…GNEHSLLSGN (82 aa)) is head. A coil 1A region spans residues 83-118 (EKVTMQNLNDRLASYLDHVHALEEANADLEQKIKGW). The 316-residue stretch at 83-398 (EKVTMQNLND…NLLDGEERKS (316 aa)) folds into the IF rod domain. Positions 119–140 (YEKCEPGSSREHDHDYSRYFSV) are linker 1. The coil 1B stretch occupies residues 141–232 (IEDLKRQIIS…KSHEEEMEVL (92 aa)). The segment at 233-255 (QYTAGGNVNVEMNATPGVDLTVL) is linker 12. The tract at residues 256–394 (LNNMRAEYED…DIYCNLLDGE (139 aa)) is coil 2. A tail region spans residues 395–465 (ERKSKSTCYK…NITVEQRVPS (71 aa)).

Belongs to the intermediate filament family. In terms of assembly, heterotetramer of two type I and two type II keratins. Strongly expressed in skin and scalp, and weak expression observed in thymus and tongue. In the hair follicle, expression is restricted to the mid- to upper inner root sheath cuticle, being present slightly above the apex of the dermal papilla (at protein level).

In Homo sapiens (Human), this protein is Keratin, type I cytoskeletal 26.